We begin with the raw amino-acid sequence, 444 residues long: Phosphoglucosamine mutase (444 aa).

The active-site Phosphoserine intermediate is the Ser102. Mg(2+) is bound by residues Ser102, Asp241, Asp243, and Asp245. Ser102 is subject to Phosphoserine.

This sequence belongs to the phosphohexose mutase family. Requires Mg(2+) as cofactor. Activated by phosphorylation.

It carries out the reaction alpha-D-glucosamine 1-phosphate = D-glucosamine 6-phosphate. Catalyzes the conversion of glucosamine-6-phosphate to glucosamine-1-phosphate. In Actinobacillus pleuropneumoniae serotype 5b (strain L20), this protein is Phosphoglucosamine mutase.